We begin with the raw amino-acid sequence, 185 residues long: MIDDTLLEAEEKMEKAVSVAREDFANIRTGRITPAVFSKILVDYYGAPTPVQQLASFHIPEPRMVIITPYDKSSLGAIEKAVRDSDLGVNPSNDGTIIRCVFPELSEQRRRDLVKVARTKAEEARVSIRNVRRHAKDTIDRIVRDGDAGEDEGRRGEKDLDEATHRYVGQVDELLRLKESDLLSV.

It belongs to the RRF family.

The protein localises to the cytoplasm. Its function is as follows. Responsible for the release of ribosomes from messenger RNA at the termination of protein biosynthesis. May increase the efficiency of translation by recycling ribosomes from one round of translation to another. The sequence is that of Ribosome-recycling factor from Frankia casuarinae (strain DSM 45818 / CECT 9043 / HFP020203 / CcI3).